The following is a 1346-amino-acid chain: MKSPRRTTLCLMFIVIYSSKAALNWNYESTIHPLSLHEHEPAGEEALRQKRAVATKSPTAEEYTVNIEISFENASFLDPIKAYLNSLSFPIHGNNTDQITDILSINVTTVCRPAGNEIWCSCETGYGWPRERCLHNLICQERDVFLPGHHCSCLKELPPNGPFCLLQEDVTLNMRVRLNVGFQEDLMNTSSALYRSYKTDLETAFRKGYGILPGFKGVTVTGFKSGSVVVTYEVKTTPPSLELIHKANEQVVQSLNQTYKMDYNSFQAVTINESNFFVTPEIIFEGDTVSLVCEKEVLSSNVSWRYEEQQLEIQNSSRFSIYTALFNNMTSVSKLTIHNITPGDAGEYVCKLILDIFEYECKKKIDVMPIQILANEEMKVMCDNNPVSLNCCSQGNVNWSKVEWKQEGKINIPGTPETDIDSSCSRYTLKADGTQCPSGSSGTTVIYTCEFISAYGARGSANIKVTFISVANLTITPDPISVSEGQNFSIKCISDVSNYDEVYWNTSAGIKIYQRFYTTRRYLDGAESVLTVKTSTREWNGTYHCIFRYKNSYSIATKDVIVHPLPLKLNIMVDPLEATVSCSGSHHIKCCIEEDGDYKVTFHTGSSSLPAAKEVNKKQVCYKHNFNASSVSWCSKTVDVCCHFTNAANNSVWSPSMKLNLVPGENITCQDPVIGVGEPGKVIQKLCRFSNVPSSPESPIGGTITYKCVGSQWEEKRNDCISAPINSLLQMAKALIKSPSQDEMLPTYLKDLSISIDKAEHEISSSPGSLGAIINILDLLSTVPTQVNSEMMTHVLSTVNVILGKPVLNTWKVLQQQWTNQSSQLLHSVERFSQALQSGDSPPLSFSQTNVQMSSMVIKSSHPETYQQRFVFPYFDLWGNVVIDKSYLENLQSDSSIVTMAFPTLQAILAQDIQENNFAESLVMTTTVSHNTTMPFRISMTFKNNSPSGGETKCVFWNFRLANNTGGWDSSGCYVEEGDGDNVTCICDHLTSFSILMSPDSPDPSSLLGILLDIISYVGVGFSILSLAACLVVEAVVWKSVTKNRTSYMRHTCIVNIAASLLVANTWFIVVAAIQDNRYILCKTACVAATFFIHFFYLSVFFWMLTLGLMLFYRLVFILHETSRSTQKAIAFCLGYGCPLAISVITLGATQPREVYTRKNVCWLNWEDTKALLAFAIPALIIVVVNITITIVVITKILRPSIGDKPCKQEKSSLFQISKSIGVLTPLLGLTWGFGLTTVFPGTNLVFHIIFAILNVFQGLFILLFGCLWDLKVQEALLNKFSLSRWSSQHSKSTSLGSSTPVFSMSSPISRRFNNLFGKTGTYNVSTPEATSSSLENSSSASSLLN.

The N-terminal stretch at 1–21 (MKSPRRTTLCLMFIVIYSSKA) is a signal peptide. At 22-1006 (ALNWNYESTI…MSPDSPDPSS (985 aa)) the chain is on the extracellular side. N-linked (GlcNAc...) asparagine glycans are attached at residues Asn-73, Asn-94, Asn-106, Asn-188, Asn-256, Asn-272, Asn-301, Asn-315, Asn-328, Asn-398, Asn-472, Asn-487, Asn-505, Asn-540, Asn-627, Asn-649, Asn-666, Asn-820, Asn-931, Asn-963, and Asn-982. One can recognise an SEA domain in the interval 166–273 (LQEDVTLNMR…NSFQAVTINE (108 aa)). Ig-like domains are found at residues 267 to 368 (QAVT…IDVM), 369 to 466 (PIQI…IKVT), and 471 to 561 (ANLT…KDVI). 2 disulfides stabilise this stretch: Cys-293–Cys-350 and Cys-391–Cys-449. The cysteines at positions 492 and 545 are disulfide-linked. The GAIN-B domain occupies 842–1003 (PPLSFSQTNV…SILMSPDSPD (162 aa)). Disulfide bonds link Cys-954–Cys-985 and Cys-973–Cys-987. The interval 954–1003 (CVFWNFRLANNTGGWDSSGCYVEEGDGDNVTCICDHLTSFSILMSPDSPD) is GPS. The tethered agonist stretch occupies residues 991 to 1006 (TSFSILMSPDSPDPSS). Residues 1007–1027 (LLGILLDIISYVGVGFSILSL) form a helical membrane-spanning segment. Topologically, residues 1028-1053 (AACLVVEAVVWKSVTKNRTSYMRHTC) are cytoplasmic. Residues 1054-1074 (IVNIAASLLVANTWFIVVAAI) traverse the membrane as a helical segment. Residues 1075 to 1090 (QDNRYILCKTACVAAT) are Extracellular-facing. Residues 1091-1111 (FFIHFFYLSVFFWMLTLGLML) traverse the membrane as a helical segment. Over 1112-1128 (FYRLVFILHETSRSTQK) the chain is Cytoplasmic. A helical membrane pass occupies residues 1129 to 1149 (AIAFCLGYGCPLAISVITLGA). The Extracellular segment spans residues 1150–1173 (TQPREVYTRKNVCWLNWEDTKALL). Residues 1174–1194 (AFAIPALIIVVVNITITIVVI) traverse the membrane as a helical segment. Residues 1195-1220 (TKILRPSIGDKPCKQEKSSLFQISKS) lie on the Cytoplasmic side of the membrane. A helical transmembrane segment spans residues 1221-1241 (IGVLTPLLGLTWGFGLTTVFP). The Extracellular portion of the chain corresponds to 1242-1244 (GTN). Residues 1245-1265 (LVFHIIFAILNVFQGLFILLF) form a helical membrane-spanning segment. Residues 1266–1346 (GCLWDLKVQE…NSSSASSLLN (81 aa)) lie on the Cytoplasmic side of the membrane. The residue at position 1300 (Thr-1300) is a Phosphothreonine. Phosphoserine is present on Ser-1307. The interval 1327-1346 (TPEATSSSLENSSSASSLLN) is disordered. A compositionally biased stretch (low complexity) spans 1329–1346 (EATSSSLENSSSASSLLN).

Belongs to the G-protein coupled receptor 2 family. Adhesion G-protein coupled receptor (ADGR) subfamily. Homodimer; disulfide-linked. Heterodimer of 2 chains generated by proteolytic processing; the large extracellular N-terminal fragment and the membrane-bound C-terminal fragment predominantly remain associated and non-covalently linked. Fragment generates by the processing enzyme furin remains attached to the extracellular N-terminal fragment. Interacts (via N-terminal extracellular domain) with SFTPD. Highly glycosylated. Post-translationally, proteolytically cleaved at multiple sites: one in the GPS region of the GAIN-B domain (S1 site) and the other in the SEA domain (S2 site). The proteolytic cleavage at S1 site generates an extracellular subunit and a seven-transmembrane subunit. The proteolytic cleavage at S2 site generates a fragment that undergoes proteolytic cleavage by the processing enzyme furin. Expressed in lung endothelial cells and in alveolar type II (ATII) cells (at protein level). Expressed high levels in subcutaneous adipose tissue in lean individuals and at lower levels in visceral fat. Expression levels in subcutaneous adipose tissue drastically drop in obese individuals.

It localises to the cell membrane. With respect to regulation, as an adhesion G protein-coupled receptor (aGPCR) exhibits a large N-terminal extracellular domain containing highly conserved GPCR autoproteolysis-inducing (GAIN) domain. During synthesis, intracellular autoproteolytic processing of nascent chain within the GAIN domain generates a mature protein, consisting of an N-terminal fragment that is non-covalently linked to the C-terminal fragment. The mature protein is routed to the plasma membrane where the N- and C-terminal fragments remain associated, forming the holoreceptor. Dissociation of the aGPCR fragments stimulates G protein signaling through the action of the tethered-peptide agonist stalk that is occluded within the GAIN domain in the holoreceptor form. This dissociation might be induced by ligand binding, such as that of sFNDC4. Adhesion G protein-coupled receptor. In alveolar type II (ATII or AT2) cells, required for normal lung surfactant homeostasis. Modulation of both surfactant secretion and uptake by ATII cells is mediated by the downstream activation of GNAQ/GNA11 proteins and may be a consequence of increased cortical F-actin assembly induced by ADGRF5 activation. In the kidney, may play a role in the regulation of acid excretion into the primary urine, possibly by regulating the surface expression of V-ATPase proton pump. As a receptor for soluble FNDC4 (sFNDC4), required for proper systemic glucose tolerance, specifically sensitizing white adipose tissue to insulin. Also plays a role in sFNDC4-induced decrease of local inflammation in white adipose tissue. This chain is Adhesion G protein-coupled receptor F5, found in Homo sapiens (Human).